Consider the following 807-residue polypeptide: Probable E3 ubiquitin-protein ligase mug30 (807 aa).

Residues 453–807 form the HECT domain; sequence RNKDFRKALK…LLETNGFNIR (355 aa). Cysteine 775 serves as the catalytic Glycyl thioester intermediate.

The protein resides in the cytoplasm. It localises to the cytoskeleton. It is found in the microtubule organizing center. Its subcellular location is the spindle pole body. It carries out the reaction S-ubiquitinyl-[E2 ubiquitin-conjugating enzyme]-L-cysteine + [acceptor protein]-L-lysine = [E2 ubiquitin-conjugating enzyme]-L-cysteine + N(6)-ubiquitinyl-[acceptor protein]-L-lysine.. It participates in protein modification; protein ubiquitination. Probable E3 ubiquitin-protein ligase. Has a role in meiosis. This Schizosaccharomyces pombe (strain 972 / ATCC 24843) (Fission yeast) protein is Probable E3 ubiquitin-protein ligase mug30 (mug30).